A 172-amino-acid polypeptide reads, in one-letter code: Centrin-1 (172 aa).

Residues 1–30 (MASSYRKPTVASTSQKRKVGPKPELTEEQK) form a disordered region. EF-hand domains follow at residues 28-63 (EQKQ…LGFE), 64-99 (PRKE…KMAE), 101-136 (DTKE…LGEN), and 137-172 (LTDE…TNLY). Residues aspartate 41, aspartate 43, serine 45, threonine 47, and glutamate 52 each contribute to the Ca(2+) site. Residues aspartate 150, aspartate 152, aspartate 154, glutamate 156, and glutamate 161 each coordinate Ca(2+).

This sequence belongs to the centrin family. Monomer. Interacts with CIMAP3. Interacts with USP49.

It localises to the cytoplasm. The protein localises to the cytoskeleton. Its subcellular location is the microtubule organizing center. The protein resides in the centrosome. In terms of biological role, plays a fundamental role in microtubule-organizing center structure and function. Plays a role in sperm cilia formation. The sequence is that of Centrin-1 (CETN1) from Bos taurus (Bovine).